A 403-amino-acid polypeptide reads, in one-letter code: Argininosuccinate synthase (403 aa).

ATP contacts are provided by residues 10 to 18 (AYSGGLDTS) and A37. 2 residues coordinate L-citrulline: Y88 and S93. G118 is an ATP binding site. L-aspartate contacts are provided by T120, N124, and D125. N124 is a binding site for L-citrulline. L-citrulline is bound by residues R128, S178, S187, E263, and Y275.

The protein belongs to the argininosuccinate synthase family. Type 1 subfamily. In terms of assembly, homotetramer.

It is found in the cytoplasm. The enzyme catalyses L-citrulline + L-aspartate + ATP = 2-(N(omega)-L-arginino)succinate + AMP + diphosphate + H(+). It participates in amino-acid biosynthesis; L-arginine biosynthesis; L-arginine from L-ornithine and carbamoyl phosphate: step 2/3. The protein is Argininosuccinate synthase of Marinobacter nauticus (strain ATCC 700491 / DSM 11845 / VT8) (Marinobacter aquaeolei).